Reading from the N-terminus, the 617-residue chain is Elongation factor 4 (617 aa).

Residues 17–203 form the tr-type G domain; that stretch reads ERIRNFCIIA…RVCELVPHPV (187 aa). GTP-binding positions include 29–34 and 150–153; these read DHGKST and NKID.

Belongs to the TRAFAC class translation factor GTPase superfamily. Classic translation factor GTPase family. LepA subfamily.

Its subcellular location is the cell membrane. The catalysed reaction is GTP + H2O = GDP + phosphate + H(+). Required for accurate and efficient protein synthesis under certain stress conditions. May act as a fidelity factor of the translation reaction, by catalyzing a one-codon backward translocation of tRNAs on improperly translocated ribosomes. Back-translocation proceeds from a post-translocation (POST) complex to a pre-translocation (PRE) complex, thus giving elongation factor G a second chance to translocate the tRNAs correctly. Binds to ribosomes in a GTP-dependent manner. The chain is Elongation factor 4 from Corynebacterium urealyticum (strain ATCC 43042 / DSM 7109).